The primary structure comprises 369 residues: Methionine import ATP-binding protein MetN 1 (369 aa).

The segment at 1-26 (MTTMTVPPSLLPLEPFPTAPDTRAST) is disordered. Positions 29–265 (IRLHGLGKRY…PRHAVTRSLL (237 aa)) constitute an ABC transporter domain. Position 62-69 (62-69 (GRSGAGKS)) interacts with ATP.

It belongs to the ABC transporter superfamily. Methionine importer (TC 3.A.1.24) family. As to quaternary structure, the complex is composed of two ATP-binding proteins (MetN), two transmembrane proteins (MetI) and a solute-binding protein (MetQ).

It localises to the cell inner membrane. The catalysed reaction is L-methionine(out) + ATP + H2O = L-methionine(in) + ADP + phosphate + H(+). It carries out the reaction D-methionine(out) + ATP + H2O = D-methionine(in) + ADP + phosphate + H(+). Part of the ABC transporter complex MetNIQ involved in methionine import. Responsible for energy coupling to the transport system. The polypeptide is Methionine import ATP-binding protein MetN 1 (Pseudomonas aeruginosa (strain UCBPP-PA14)).